Consider the following 30-residue polypeptide: Ribonuclease pancreatic (30 aa).

Basic and acidic residues predominate over residues 1 to 13 (KETAAAKFERQHM). The disordered stretch occupies residues 1-21 (KETAAAKFERQHMDPAPAAAX). Lys-7 and Arg-10 together coordinate substrate. Residue His-12 is the Proton acceptor of the active site.

Belongs to the pancreatic ribonuclease family. Monomer. Interacts with and forms tight 1:1 complexes with RNH1. Dimerization of two such complexes may occur. Interaction with RNH1 inhibits this protein. Pancreas.

The protein localises to the secreted. The catalysed reaction is an [RNA] containing cytidine + H2O = an [RNA]-3'-cytidine-3'-phosphate + a 5'-hydroxy-ribonucleotide-3'-[RNA].. The enzyme catalyses an [RNA] containing uridine + H2O = an [RNA]-3'-uridine-3'-phosphate + a 5'-hydroxy-ribonucleotide-3'-[RNA].. Endonuclease that catalyzes the cleavage of RNA on the 3' side of pyrimidine nucleotides. Acts on single-stranded and double-stranded RNA. The sequence is that of Ribonuclease pancreatic (RNASE1) from Odocoileus virginianus virginianus (Virginia white-tailed deer).